We begin with the raw amino-acid sequence, 268 residues long: Thiazole synthase (268 aa).

The active-site Schiff-base intermediate with DXP is Lys111. 1-deoxy-D-xylulose 5-phosphate is bound by residues Gly172, 198 to 199 (AG), and 220 to 221 (NT).

The protein belongs to the ThiG family. As to quaternary structure, homotetramer. Forms heterodimers with either ThiH or ThiS.

Its subcellular location is the cytoplasm. The enzyme catalyses [ThiS sulfur-carrier protein]-C-terminal-Gly-aminoethanethioate + 2-iminoacetate + 1-deoxy-D-xylulose 5-phosphate = [ThiS sulfur-carrier protein]-C-terminal Gly-Gly + 2-[(2R,5Z)-2-carboxy-4-methylthiazol-5(2H)-ylidene]ethyl phosphate + 2 H2O + H(+). Its pathway is cofactor biosynthesis; thiamine diphosphate biosynthesis. Its function is as follows. Catalyzes the rearrangement of 1-deoxy-D-xylulose 5-phosphate (DXP) to produce the thiazole phosphate moiety of thiamine. Sulfur is provided by the thiocarboxylate moiety of the carrier protein ThiS. In vitro, sulfur can be provided by H(2)S. This chain is Thiazole synthase, found in Caulobacter sp. (strain K31).